Consider the following 131-residue polypeptide: UPF0342 protein DSY1594 (131 aa).

This sequence belongs to the UPF0342 family.

This is UPF0342 protein DSY1594 from Desulfitobacterium hafniense (strain Y51).